We begin with the raw amino-acid sequence, 222 residues long: Deoxyribose-phosphate aldolase (222 aa).

Asp90 (proton donor/acceptor) is an active-site residue. Lys152 acts as the Schiff-base intermediate with acetaldehyde in catalysis. Lys181 acts as the Proton donor/acceptor in catalysis.

The protein belongs to the DeoC/FbaB aldolase family. DeoC type 1 subfamily.

Its subcellular location is the cytoplasm. The enzyme catalyses 2-deoxy-D-ribose 5-phosphate = D-glyceraldehyde 3-phosphate + acetaldehyde. Its pathway is carbohydrate degradation; 2-deoxy-D-ribose 1-phosphate degradation; D-glyceraldehyde 3-phosphate and acetaldehyde from 2-deoxy-alpha-D-ribose 1-phosphate: step 2/2. In terms of biological role, catalyzes a reversible aldol reaction between acetaldehyde and D-glyceraldehyde 3-phosphate to generate 2-deoxy-D-ribose 5-phosphate. This is Deoxyribose-phosphate aldolase from Pectobacterium carotovorum subsp. carotovorum (strain PC1).